The chain runs to 158 residues: NAD(P)H-quinone oxidoreductase subunit J, chloroplastic (158 aa).

Belongs to the complex I 30 kDa subunit family. NDH is composed of at least 16 different subunits, 5 of which are encoded in the nucleus.

It is found in the plastid. Its subcellular location is the chloroplast thylakoid membrane. The catalysed reaction is a plastoquinone + NADH + (n+1) H(+)(in) = a plastoquinol + NAD(+) + n H(+)(out). It catalyses the reaction a plastoquinone + NADPH + (n+1) H(+)(in) = a plastoquinol + NADP(+) + n H(+)(out). Functionally, NDH shuttles electrons from NAD(P)H:plastoquinone, via FMN and iron-sulfur (Fe-S) centers, to quinones in the photosynthetic chain and possibly in a chloroplast respiratory chain. The immediate electron acceptor for the enzyme in this species is believed to be plastoquinone. Couples the redox reaction to proton translocation, and thus conserves the redox energy in a proton gradient. The protein is NAD(P)H-quinone oxidoreductase subunit J, chloroplastic of Citrus sinensis (Sweet orange).